The following is a 513-amino-acid chain: ATP synthase subunit alpha (513 aa).

Position 169–176 (169–176) interacts with ATP; that stretch reads GDRQTGKS.

Belongs to the ATPase alpha/beta chains family. F-type ATPases have 2 components, CF(1) - the catalytic core - and CF(0) - the membrane proton channel. CF(1) has five subunits: alpha(3), beta(3), gamma(1), delta(1), epsilon(1). CF(0) has three main subunits: a(1), b(2) and c(9-12). The alpha and beta chains form an alternating ring which encloses part of the gamma chain. CF(1) is attached to CF(0) by a central stalk formed by the gamma and epsilon chains, while a peripheral stalk is formed by the delta and b chains.

It is found in the cell membrane. The enzyme catalyses ATP + H2O + 4 H(+)(in) = ADP + phosphate + 5 H(+)(out). Produces ATP from ADP in the presence of a proton gradient across the membrane. The alpha chain is a regulatory subunit. In Baumannia cicadellinicola subsp. Homalodisca coagulata, this protein is ATP synthase subunit alpha.